Consider the following 955-residue polypeptide: Mediator of RNA polymerase II transcription subunit 16 (955 aa).

A disordered region spans residues 855-874; sequence ALPETNANANANQNGKSSTQ. A compositionally biased stretch (polar residues) spans 857-873; that stretch reads PETNANANANQNGKSST.

This sequence belongs to the Mediator complex subunit 16 family. As to quaternary structure, component of the Mediator complex.

It is found in the nucleus. Its function is as follows. Component of the Mediator complex, a coactivator involved in the regulated transcription of nearly all RNA polymerase II-dependent genes. Mediator functions as a bridge to convey information from gene-specific regulatory proteins to the basal RNA polymerase II transcription machinery. Mediator is recruited to promoters by direct interactions with regulatory proteins and serves as a scaffold for the assembly of a functional preinitiation complex with RNA polymerase II and the general transcription factors. The chain is Mediator of RNA polymerase II transcription subunit 16 (sin4) from Aspergillus fumigatus (strain ATCC MYA-4609 / CBS 101355 / FGSC A1100 / Af293) (Neosartorya fumigata).